A 271-amino-acid polypeptide reads, in one-letter code: MGHMVNAIYQIDEFVNLGANSIETDVSFDDNANPEYTHHGIPCDCGRSCLKWKNYNDFLKGLRSATTPGNSKYQSKLILVVFDLKTGSLYDNQASEAGKKLAKNLLKHYWNNGNNGGRAYIVLSIPDLNHYPLIKGFTDTLKQEGHPELLEKVGYDFSGNDAVGDVAKAYKKAGVSGHVWQSDGITNCLLRGLTRVKEAVANRDSGNGYINKVYYWTVDKRATTRDALDAGVDGVMTNYPDVIADVMSEAAYKNKVRLATYEDSPWVTFKK.

Residue His3 is part of the active site. Residues Glu23 and Asp25 each coordinate Mg(2+). The active-site Nucleophile is His39. 2 disulfide bridges follow: Cys43-Cys49 and Cys45-Cys188. Asp83 contacts Mg(2+).

This sequence belongs to the arthropod phospholipase D family. Class II subfamily. Mg(2+) serves as cofactor. Expressed by the venom gland.

Its subcellular location is the secreted. It catalyses the reaction an N-(acyl)-sphingosylphosphocholine = an N-(acyl)-sphingosyl-1,3-cyclic phosphate + choline. The enzyme catalyses an N-(acyl)-sphingosylphosphoethanolamine = an N-(acyl)-sphingosyl-1,3-cyclic phosphate + ethanolamine. It carries out the reaction a 1-acyl-sn-glycero-3-phosphocholine = a 1-acyl-sn-glycero-2,3-cyclic phosphate + choline. The catalysed reaction is a 1-acyl-sn-glycero-3-phosphoethanolamine = a 1-acyl-sn-glycero-2,3-cyclic phosphate + ethanolamine. Dermonecrotic toxins cleave the phosphodiester linkage between the phosphate and headgroup of certain phospholipids (sphingolipid and lysolipid substrates), forming an alcohol (often choline) and a cyclic phosphate. This toxin acts on sphingomyelin (SM). It may also act on ceramide phosphoethanolamine (CPE), lysophosphatidylcholine (LPC) and lysophosphatidylethanolamine (LPE), but not on lysophosphatidylserine (LPS), and lysophosphatidylglycerol (LPG). It acts by transphosphatidylation, releasing exclusively cyclic phosphate products as second products. Induces dermonecrosis, hemolysis, increased vascular permeability, edema, inflammatory response, and platelet aggregation. This is Dermonecrotic toxin LhSicTox-alphaIA2aiv from Loxosceles hirsuta (Recluse spider).